A 426-amino-acid polypeptide reads, in one-letter code: Serine hydroxymethyltransferase (426 aa).

(6S)-5,6,7,8-tetrahydrofolate is bound by residues Leu122 and 126-128 (GHL). The residue at position 231 (Lys231) is an N6-(pyridoxal phosphate)lysine. Residues Glu247 and 355-357 (SPF) contribute to the (6S)-5,6,7,8-tetrahydrofolate site.

This sequence belongs to the SHMT family. Homodimer. Pyridoxal 5'-phosphate serves as cofactor.

The protein resides in the cytoplasm. It catalyses the reaction (6R)-5,10-methylene-5,6,7,8-tetrahydrofolate + glycine + H2O = (6S)-5,6,7,8-tetrahydrofolate + L-serine. It participates in one-carbon metabolism; tetrahydrofolate interconversion. The protein operates within amino-acid biosynthesis; glycine biosynthesis; glycine from L-serine: step 1/1. Its function is as follows. Catalyzes the reversible interconversion of serine and glycine with tetrahydrofolate (THF) serving as the one-carbon carrier. This reaction serves as the major source of one-carbon groups required for the biosynthesis of purines, thymidylate, methionine, and other important biomolecules. Also exhibits THF-independent aldolase activity toward beta-hydroxyamino acids, producing glycine and aldehydes, via a retro-aldol mechanism. The chain is Serine hydroxymethyltransferase from Cyanothece sp. (strain PCC 7425 / ATCC 29141).